The primary structure comprises 224 residues: EEF1A lysine methyltransferase 3 (224 aa).

Residues Trp58, 84 to 86, Asp105, Trp134, and Ala151 each bind S-adenosyl-L-methionine; that span reads GAG.

The protein belongs to the methyltransferase superfamily. METTL21 family.

The protein localises to the cytoplasm. Its subcellular location is the cytoskeleton. It localises to the microtubule organizing center. The protein resides in the centrosome. It catalyses the reaction L-lysyl-[protein] + 3 S-adenosyl-L-methionine = N(6),N(6),N(6)-trimethyl-L-lysyl-[protein] + 3 S-adenosyl-L-homocysteine + 3 H(+). The enzyme catalyses L-lysyl-[protein] + S-adenosyl-L-methionine = N(6)-methyl-L-lysyl-[protein] + S-adenosyl-L-homocysteine + H(+). The catalysed reaction is N(6)-methyl-L-lysyl-[protein] + S-adenosyl-L-methionine = N(6),N(6)-dimethyl-L-lysyl-[protein] + S-adenosyl-L-homocysteine + H(+). It carries out the reaction N(6),N(6)-dimethyl-L-lysyl-[protein] + S-adenosyl-L-methionine = N(6),N(6),N(6)-trimethyl-L-lysyl-[protein] + S-adenosyl-L-homocysteine + H(+). Functionally, protein-lysine methyltransferase that selectively mono-, di- and trimethylates 'Lys-165' of the translation elongation factors EEF1A1 and EEF1A2 in an aminoacyl-tRNA and GTP-dependent manner. EEF1A1 methylation by EEF1AKMT3 is dynamic as well as inducible by stress conditions, such as ER-stress, and plays a regulatory role on mRNA translation. The sequence is that of EEF1A lysine methyltransferase 3 from Xenopus tropicalis (Western clawed frog).